Consider the following 759-residue polypeptide: 5-methyltetrahydropteroyltriglutamate--homocysteine methyltransferase (759 aa).

5-methyltetrahydropteroyltri-L-glutamate-binding positions include 17-20 (RELK) and lysine 116. L-homocysteine is bound by residues 430-432 (IGS) and glutamate 483. L-methionine contacts are provided by residues 430–432 (IGS) and glutamate 483. 5-methyltetrahydropteroyltri-L-glutamate is bound by residues 514-515 (RC) and tryptophan 560. Aspartate 598 provides a ligand contact to L-homocysteine. Aspartate 598 provides a ligand contact to L-methionine. Glutamate 604 serves as a coordination point for 5-methyltetrahydropteroyltri-L-glutamate. The Zn(2+) site is built by histidine 641, cysteine 643, and glutamate 665. The active-site Proton donor is the histidine 694. Position 726 (cysteine 726) interacts with Zn(2+).

This sequence belongs to the vitamin-B12 independent methionine synthase family. It depends on Zn(2+) as a cofactor.

It catalyses the reaction 5-methyltetrahydropteroyltri-L-glutamate + L-homocysteine = tetrahydropteroyltri-L-glutamate + L-methionine. The protein operates within amino-acid biosynthesis; L-methionine biosynthesis via de novo pathway; L-methionine from L-homocysteine (MetE route): step 1/1. Catalyzes the transfer of a methyl group from 5-methyltetrahydrofolate to homocysteine resulting in methionine formation. This is 5-methyltetrahydropteroyltriglutamate--homocysteine methyltransferase from Lactococcus lactis subsp. lactis (strain IL1403) (Streptococcus lactis).